The sequence spans 386 residues: Indole-3-acetate O-methyltransferase 1 (386 aa).

Tyr30 serves as a coordination point for S-adenosyl-L-methionine. Substrate-binding positions include Tyr30 and 33–37 (NSQAQ). S-adenosyl-L-methionine is bound by residues Gly72, 72–73 (GC), Asn78, 108–111 (FSDL), Asp110, 152–154 (SFY), and 169–171 (AFS). Substrate is bound at residue 170–174 (FSLHW). Residues Asn191, Val195, Arg277, Asp278, Phe280, and Asn281 each contribute to the Mg(2+) site. Position 334 (Ser334) interacts with substrate.

The protein belongs to the methyltransferase superfamily. SABATH family. Homodimer. Mg(2+) serves as cofactor. In terms of tissue distribution, expressed in seedling roots and leaves. Expressed in the stigma, funiculus, and vascular bundles in sepals, petals and stamens.

The catalysed reaction is (indol-3-yl)acetate + S-adenosyl-L-methionine = methyl (indol-3-yl)acetate + S-adenosyl-L-homocysteine. Functionally, catalyzes the methylation of the free carboxyl end of the plant hormone indole-3-acetic acid (IAA). Converts IAA to IAA methyl ester (MeIAA). Regulates IAA activities by IAA methylation. Methylation of IAA plays an important role in regulating plant development and auxin homeostasis. Required for correct leaf pattern formation. MeIAA seems to be an inactive form of IAA. The protein is Indole-3-acetate O-methyltransferase 1 (IAMT1) of Arabidopsis thaliana (Mouse-ear cress).